The primary structure comprises 483 residues: MLIFEHSRKNRRNYSQAPATRPAKNNIPDHLKRKSTPLLPEVSEMDTVRHYTRLSQKNFSIDTEFYPLGSCTMKYNPRACNSLAMLPQFLSRHPLAPEDTGQGFLACMYELQEILKDITGMAAVSLTSMAGAQGELIGITMIRAYHEAHGDTGRTEIIIPDAAHGTNPATAVMCGYKVIEIPTNRDGDVDMDALKAAVGPKTAGLMLTNPSTLGVFEKKVAEMSRIVHAAGGLLYYDGANLNAVLGKVKPGDMGFDVIHMNLHKTFSTPHGGGGPGAAPVGVAERLLPYLPVPIVAHEQGVYRWLTEEDRPQTIGRLSAHMGNAGVLLRAYIYVRLLGAEGMHRISEYATLNANYLMAELRKLGFEIAYPNRRASHEFIVTMKEIKDRTGVTAMNLAKRLLDKGFHAPTTYFPLLVPECLLIEPAETESKETLDRFVAAMKEILDEIATQPDMVKAAPHDMPLRKIDDVKAARELDLVWDPAG.

The interval 1–33 (MLIFEHSRKNRRNYSQAPATRPAKNNIPDHLKR) is disordered. Position 264 is an N6-(pyridoxal phosphate)lysine (lysine 264).

Belongs to the GcvP family. C-terminal subunit subfamily. The glycine cleavage system is composed of four proteins: P, T, L and H. In this organism, the P 'protein' is a heterodimer of two subunits. The cofactor is pyridoxal 5'-phosphate.

The enzyme catalyses N(6)-[(R)-lipoyl]-L-lysyl-[glycine-cleavage complex H protein] + glycine + H(+) = N(6)-[(R)-S(8)-aminomethyldihydrolipoyl]-L-lysyl-[glycine-cleavage complex H protein] + CO2. In terms of biological role, the glycine cleavage system catalyzes the degradation of glycine. The P protein binds the alpha-amino group of glycine through its pyridoxal phosphate cofactor; CO(2) is released and the remaining methylamine moiety is then transferred to the lipoamide cofactor of the H protein. The polypeptide is Probable glycine dehydrogenase (decarboxylating) subunit 2 (Nitrosomonas europaea (strain ATCC 19718 / CIP 103999 / KCTC 2705 / NBRC 14298)).